A 520-amino-acid polypeptide reads, in one-letter code: GMP synthase [glutamine-hydrolyzing] (520 aa).

In terms of domain architecture, Glutamine amidotransferase type-1 spans 9-202 (TILIIDFGSQ…VHRIVGVKPG (194 aa)). The active-site Nucleophile is Cys86. Active-site residues include His176 and Glu178. The region spanning 203–395 (WTMGAYREQA…LGLPDSFIGR (193 aa)) is the GMPS ATP-PPase domain. An ATP-binding site is contributed by 230 to 236 (SGGVDSS).

In terms of assembly, homodimer.

It carries out the reaction XMP + L-glutamine + ATP + H2O = GMP + L-glutamate + AMP + diphosphate + 2 H(+). The protein operates within purine metabolism; GMP biosynthesis; GMP from XMP (L-Gln route): step 1/1. Functionally, catalyzes the synthesis of GMP from XMP. This chain is GMP synthase [glutamine-hydrolyzing], found in Brucella canis (strain ATCC 23365 / NCTC 10854 / RM-666).